Reading from the N-terminus, the 67-residue chain is DNA-directed RNA polymerase subunit omega (67 aa).

Belongs to the RNA polymerase subunit omega family. As to quaternary structure, the RNAP catalytic core consists of 2 alpha, 1 beta, 1 beta' and 1 omega subunit. When a sigma factor is associated with the core the holoenzyme is formed, which can initiate transcription.

The catalysed reaction is RNA(n) + a ribonucleoside 5'-triphosphate = RNA(n+1) + diphosphate. Promotes RNA polymerase assembly. Latches the N- and C-terminal regions of the beta' subunit thereby facilitating its interaction with the beta and alpha subunits. The polypeptide is DNA-directed RNA polymerase subunit omega (Polaromonas naphthalenivorans (strain CJ2)).